A 204-amino-acid chain; its full sequence is High frequency lysogenization protein HflD homolog (204 aa).

The protein belongs to the HflD family.

It localises to the cytoplasm. It is found in the cell inner membrane. The chain is High frequency lysogenization protein HflD homolog from Shewanella sediminis (strain HAW-EB3).